Consider the following 224-residue polypeptide: Ribose-5-phosphate isomerase A (224 aa).

Substrate contacts are provided by residues 32 to 35 (TGST), 85 to 88 (DGAD), and 98 to 101 (KGGG). E107 functions as the Proton acceptor in the catalytic mechanism. Position 125 (K125) interacts with substrate.

This sequence belongs to the ribose 5-phosphate isomerase family. As to quaternary structure, homodimer.

It carries out the reaction aldehydo-D-ribose 5-phosphate = D-ribulose 5-phosphate. The protein operates within carbohydrate degradation; pentose phosphate pathway; D-ribose 5-phosphate from D-ribulose 5-phosphate (non-oxidative stage): step 1/1. Catalyzes the reversible conversion of ribose-5-phosphate to ribulose 5-phosphate. The protein is Ribose-5-phosphate isomerase A of Pseudomonas fluorescens (strain Pf0-1).